The sequence spans 272 residues: MPELPEVETTLRGIEPKLVGRSLARVDIRQPKLRWLITPELSSEMVGEEITHLSRRGKYIGIHTSKGTLIVHLGMSGSLYFVPAETPPLFHDHVDFCFADDDVWLRYTDPRRFGAILWTTEDWHEHELIKHLGPEPLSDMFNADMLYVRAKGRKVPIKTFIMDSKVVVGVGNIYANEALFKAGIRPDRLAGNISKARLARLVECIKVVLAAAIKQGGTTLKDFVGGDGKPGYFKQELAVYGRANKACVICSKPLKEIRQAQRSTVFCINCQS.

The active-site Schiff-base intermediate with DNA is Pro2. The active-site Proton donor is Glu3. The Proton donor; for beta-elimination activity role is filled by Lys58. Residues His91, Arg111, and Arg153 each coordinate DNA. Residues 238–272 form an FPG-type zinc finger; the sequence is AVYGRANKACVICSKPLKEIRQAQRSTVFCINCQS. Residue Arg262 is the Proton donor; for delta-elimination activity of the active site.

The protein belongs to the FPG family. Monomer. Zn(2+) serves as cofactor.

It carries out the reaction Hydrolysis of DNA containing ring-opened 7-methylguanine residues, releasing 2,6-diamino-4-hydroxy-5-(N-methyl)formamidopyrimidine.. The enzyme catalyses 2'-deoxyribonucleotide-(2'-deoxyribose 5'-phosphate)-2'-deoxyribonucleotide-DNA = a 3'-end 2'-deoxyribonucleotide-(2,3-dehydro-2,3-deoxyribose 5'-phosphate)-DNA + a 5'-end 5'-phospho-2'-deoxyribonucleoside-DNA + H(+). Functionally, involved in base excision repair of DNA damaged by oxidation or by mutagenic agents. Acts as a DNA glycosylase that recognizes and removes damaged bases. Has a preference for oxidized purines, such as 7,8-dihydro-8-oxoguanine (8-oxoG). Has AP (apurinic/apyrimidinic) lyase activity and introduces nicks in the DNA strand. Cleaves the DNA backbone by beta-delta elimination to generate a single-strand break at the site of the removed base with both 3'- and 5'-phosphates. The sequence is that of Formamidopyrimidine-DNA glycosylase from Marinomonas sp. (strain MWYL1).